Consider the following 226-residue polypeptide: Cytidylate kinase (226 aa).

ATP is bound at residue 10-18 (GPASSGKST).

It belongs to the cytidylate kinase family. Type 1 subfamily.

Its subcellular location is the cytoplasm. The catalysed reaction is CMP + ATP = CDP + ADP. It catalyses the reaction dCMP + ATP = dCDP + ADP. This Streptococcus pyogenes serotype M28 (strain MGAS6180) protein is Cytidylate kinase.